A 212-amino-acid polypeptide reads, in one-letter code: Redox-sensing transcriptional repressor Rex (212 aa).

A DNA-binding region (H-T-H motif) is located at residues I16–F55. G90–G95 is a binding site for NAD(+).

The protein belongs to the transcriptional regulatory Rex family. Homodimer.

The protein resides in the cytoplasm. Modulates transcription in response to changes in cellular NADH/NAD(+) redox state. This is Redox-sensing transcriptional repressor Rex from Levilactobacillus brevis (strain ATCC 367 / BCRC 12310 / CIP 105137 / JCM 1170 / LMG 11437 / NCIMB 947 / NCTC 947) (Lactobacillus brevis).